Consider the following 181-residue polypeptide: Isopentenyl-diphosphate Delta-isomerase (181 aa).

2 residues coordinate Mn(2+): His24 and His30. Positions 28-168 (LLHLAFSVLL…PDTFSVWFPT (141 aa)) constitute a Nudix hydrolase domain. The active site involves Cys68. Cys68 contributes to the Mg(2+) binding site. His70 contacts Mn(2+). Glu88 serves as a coordination point for Mg(2+). Mn(2+) is bound by residues Glu117 and Glu119. Residue Glu119 is part of the active site.

It belongs to the IPP isomerase type 1 family. Requires Mg(2+) as cofactor. Mn(2+) serves as cofactor.

It is found in the cytoplasm. The catalysed reaction is isopentenyl diphosphate = dimethylallyl diphosphate. It participates in isoprenoid biosynthesis; dimethylallyl diphosphate biosynthesis; dimethylallyl diphosphate from isopentenyl diphosphate: step 1/1. Catalyzes the 1,3-allylic rearrangement of the homoallylic substrate isopentenyl (IPP) to its highly electrophilic allylic isomer, dimethylallyl diphosphate (DMAPP). This is Isopentenyl-diphosphate Delta-isomerase from Aliivibrio fischeri (strain ATCC 700601 / ES114) (Vibrio fischeri).